The chain runs to 148 residues: 3-dehydroquinate dehydratase (148 aa).

The active-site Proton acceptor is tyrosine 24. 3 residues coordinate substrate: asparagine 80, histidine 86, and aspartate 93. Histidine 106 acts as the Proton donor in catalysis. Substrate contacts are provided by residues 107–108 and arginine 117; that span reads IS.

Belongs to the type-II 3-dehydroquinase family. As to quaternary structure, homododecamer.

The enzyme catalyses 3-dehydroquinate = 3-dehydroshikimate + H2O. It functions in the pathway metabolic intermediate biosynthesis; chorismate biosynthesis; chorismate from D-erythrose 4-phosphate and phosphoenolpyruvate: step 3/7. Functionally, catalyzes a trans-dehydration via an enolate intermediate. In Acidovorax ebreus (strain TPSY) (Diaphorobacter sp. (strain TPSY)), this protein is 3-dehydroquinate dehydratase.